The primary structure comprises 194 residues: Xanthine phosphoribosyltransferase (194 aa).

Leu-20 and Asn-27 together coordinate xanthine. Position 128-132 (128-132) interacts with 5-phospho-alpha-D-ribose 1-diphosphate; it reads ANGQA. Residue Lys-156 coordinates xanthine.

The protein belongs to the purine/pyrimidine phosphoribosyltransferase family. Xpt subfamily. In terms of assembly, homodimer.

Its subcellular location is the cytoplasm. It carries out the reaction XMP + diphosphate = xanthine + 5-phospho-alpha-D-ribose 1-diphosphate. The protein operates within purine metabolism; XMP biosynthesis via salvage pathway; XMP from xanthine: step 1/1. In terms of biological role, converts the preformed base xanthine, a product of nucleic acid breakdown, to xanthosine 5'-monophosphate (XMP), so it can be reused for RNA or DNA synthesis. The sequence is that of Xanthine phosphoribosyltransferase from Geobacillus thermodenitrificans (strain NG80-2).